The primary structure comprises 949 residues: Translation initiation factor IF-2 (949 aa).

3 disordered regions span residues 54–183 (FLKP…EAAP), 217–288 (LPAA…EVAL), and 305–357 (EVVA…EMQA). Basic and acidic residues-rich tracts occupy residues 67 to 92 (DQEK…ERHI) and 101 to 164 (IEAK…EEAA). Low complexity-rich tracts occupy residues 165–183 (RAAA…EAAP) and 217–228 (LPAAAPAAPSAP). Composition is skewed to basic and acidic residues over residues 235–288 (PVEE…EVAL) and 330–339 (KYQDNEDRLQ). The 175-residue stretch at 445 to 619 (TRPPVITVMG…EMLNLQSNPT (175 aa)) folds into the tr-type G domain. The segment at 454 to 461 (GHVDHGKT) is G1. Residue 454–461 (GHVDHGKT) coordinates GTP. The G2 stretch occupies residues 479 to 483 (GITQH). The G3 stretch occupies residues 501–504 (DTPG). Residues 501–505 (DTPGH) and 555–558 (NKID) contribute to the GTP site. The interval 555–558 (NKID) is G4. The interval 591–593 (SAK) is G5.

This sequence belongs to the TRAFAC class translation factor GTPase superfamily. Classic translation factor GTPase family. IF-2 subfamily.

It is found in the cytoplasm. Functionally, one of the essential components for the initiation of protein synthesis. Protects formylmethionyl-tRNA from spontaneous hydrolysis and promotes its binding to the 30S ribosomal subunits. Also involved in the hydrolysis of GTP during the formation of the 70S ribosomal complex. The sequence is that of Translation initiation factor IF-2 from Magnetococcus marinus (strain ATCC BAA-1437 / JCM 17883 / MC-1).